A 770-amino-acid polypeptide reads, in one-letter code: Signal transducer and activator of transcription 3 (770 aa).

Ala2 carries the post-translational modification N-acetylalanine. 2 positions are modified to N6-acetyllysine: Lys49 and Lys87. Residues 150–162 (DVRKRVQDLEQKM) carry the Essential for nuclear import motif. Residues 580-670 (WNEGYIMGFI…DATNILVSPL (91 aa)) form the SH2 domain. Residues Lys601, Lys615, and Lys631 each carry the allysine; alternate modification. An N6-acetyllysine; alternate mark is found at Lys601, Lys615, and Lys631. Tyr640 is subject to Phosphotyrosine; by TYK2. Residue Lys685 is modified to Allysine; alternate. An N6-acetyllysine; alternate modification is found at Lys685. At Tyr705 the chain carries Phosphotyrosine; by FER and PTK6. The residue at position 707 (Lys707) is an N6-acetyllysine. Thr714 bears the Phosphothreonine mark. A Phosphoserine; by DYRK2, NLK, NEK6, IRAK1, RPS6KA5, ZIPK/DAPK3 and PKC/PRKCE modification is found at Ser727.

The protein belongs to the transcription factor STAT family. In terms of assembly, forms a homodimer or a heterodimer with a related family member (at least STAT1). Component of a promoter-binding complex composed of STAT3, NFATC3 and NFATC4; complex formation is enhanced by calcineurin. Interacts with IL31RA, NCOA1, PELP1, SIPAR, SOCS7, STATIP1 and TMF1. Interacts with IL23R in presence of IL23. Interacts (via SH2 domain) with NLK. Interacts with ARL2BP; the interaction is enhanced by LIF and JAK1 expression. Interacts with KPNA4 and KPNA5; KPNA4 may be the primary mediator of nuclear import. Interacts with CAV2; the interaction is increased on insulin-induced tyrosine phosphorylation of CAV2 and leads to STAT3 activation. Interacts with ARL2BP; interaction is enhanced with ARL2. Interacts with NEK6. Binds to CDK9 when activated and nuclear. Interacts with BMX. Interacts with ZIPK/DAPK3. Interacts with PIAS3; the interaction occurs on stimulation by IL6, CNTF or OSM and inhibits the DNA binding activity of STAT3. In prostate cancer cells, interacts with PRKCE and promotes DNA binding activity of STAT3. Interacts with STMN3, antagonizing its microtubule-destabilizing activity. Interacts with the 'Lys-129' acetylated form of BIRC5/survivin. Interacts with FER. Interacts (via SH2 domain) with EIF2AK2/PKR (via the kinase catalytic domain). Interacts with FGFR4. Interacts with INPP5F; the interaction is independent of STAT3 Tyr-705 phosphorylation status. Interacts with OCIAD1 and OCIAD2. Interacts (unphosphorylated or phosphorylated at Ser-727) with PHB1. Interacts and may form heterodimers with NHLH1. Found in a complex with SLC39A6, SLC39A10 and with the 'Ser-727' phosphorylated form of STAT3 throughout mitosis. Interacts (when acetylated) with EP300 (via bromo domain); interaction takes place following STAT3 acetylation by EP300 and promotes enhanceosome assembly. Interacts (when acetylated) with BRD2 (via bromo domain); interaction promotes STAT3 recruitment to chromatin and T-helper Th17 cell differentiation. Interacts with FAM220A/SIPAR; the interaction occurs in both the nucleus and the cytoplasm, is enhanced by IL6 and promotes STAT3 dephosphorylation. Interacts in both unphosphorylated and phosphorylated forms with FAM220A but interacts preferentially in the phosphorylated form in the nucleus. Interacts with PTPN2; the interaction is promoted by FAM220A and leads to STAT3 dephosphorylation which negatively regulates STAT3 transcriptional activator activity. Post-translationally, activated through tyrosine phosphorylation by BMX. Tyrosine phosphorylated in response to IL6, IL11, CNTF, LIF, KITLG/SCF, CSF1, EGF, PDGF, IFN-alpha and OSM. Activated KIT promotes phosphorylation on tyrosine residues and subsequent translocation to the nucleus. Tyrosine phosphorylated in response to constitutively activated FGFR1, FGFR2, FGFR3 and FGFR4. Phosphorylated on serine upon DNA damage, probably by ATM or ATR. Serine phosphorylation is important for the formation of stable DNA-binding STAT3 homodimers and maximal transcriptional activity. ARL2BP may participate in keeping the phosphorylated state of STAT3 within the nucleus. Tyrosine phosphorylated upon stimulation with EGF. Upon LPS challenge, phosphorylated within the nucleus by IRAK1. Phosphorylated on Ser-727 by RPS6KA5. Dephosphorylation on tyrosine residues by PTPN2 negatively regulates IL6/interleukin-6 signaling. Phosphorylation at Tyr-705 by FER, isoform M2 of PKM (PKM2) or PTK6 leads to an increase of its transcriptional activity. Phosphorylation at Tyr-705 is increased in the presence of calcineurin. Phosphorylation at Tyr-640 by TYK2 negatively regulates transcriptional activity. In terms of processing, acetylated on lysine residues by EP300/p300, promoting its activation. Acetylation at Lys-49 and Lys-87 by EP300/p300 promotes its activation. Acetylation at Lys-87 by EP300/p300 promotes its association with BRD2 and recruitment to chromatin. Deacetylated at Lys-49 and Lys-87 by HDAC1. Acetylation at Lys-685 by EP300/p300 promotes its homodimerization and activation. Deacetylated at Lys-685 by HDAC3. Acetylated on lysine residues by CREBBP. Deacetylation by LOXL3 leads to disrupt STAT3 dimerization and inhibit STAT3 transcription activity. Oxidation of lysine residues to allysine on STAT3 preferentially takes place on lysine residues that are acetylated. Some lysine residues are oxidized to allysine by LOXL3, leading to disrupt STAT3 dimerization and inhibit STAT3 transcription activity. Oxidation of lysine residues to allysine on STAT3 preferentially takes place on lysine residues that are acetylated. In terms of tissue distribution, detected in lung, heart, oviduct, ovary, uterus and kidney (at protein level). Expressed in cardiomyocytes (at protein level). Detected in ovary, oviduct, and at lower levels in uterus and lung.

Its subcellular location is the cytoplasm. The protein resides in the nucleus. Functionally, signal transducer and transcription activator that mediates cellular responses to interleukins, KITLG/SCF, LEP and other growth factors. Once activated, recruits coactivators, such as NCOA1 or MED1, to the promoter region of the target gene. May mediate cellular responses to activated FGFR1, FGFR2, FGFR3 and FGFR4. Upon activation of IL6ST/gp130 signaling by interleukin-6 (IL6), binds to the IL6-responsive elements identified in the promoters of various acute-phase protein genes. Activated by IL31 through IL31RA. Acts as a regulator of inflammatory response by regulating differentiation of naive CD4(+) T-cells into T-helper Th17 or regulatory T-cells (Treg): acetylation promotes its transcription activity and cell differentiation while deacetylation and oxidation of lysine residues by LOXL3 inhibits differentiation. Involved in cell cycle regulation by inducing the expression of key genes for the progression from G1 to S phase, such as CCND1. Mediates the effects of LEP on melanocortin production, body energy homeostasis and lactation. May play an apoptotic role by transctivating BIRC5 expression under LEP activation. Cytoplasmic STAT3 represses macroautophagy by inhibiting EIF2AK2/PKR activity. Plays a crucial role in basal beta cell functions, such as regulation of insulin secretion. Following JAK/STAT signaling activation and as part of a complex with NFATC3 and NFATC4, binds to the alpha-beta E4 promoter region of CRYAB and activates transcription in cardiomyocytes. Plays an important role in host defense in methicillin-resistant S.aureus lung infection by regulating the expression of the antimicrobial lectin REG3G. The sequence is that of Signal transducer and activator of transcription 3 (Stat3) from Rattus norvegicus (Rat).